Reading from the N-terminus, the 476-residue chain is Protein transport protein Sec61 subunit alpha (476 aa).

Topologically, residues 2 to 33 (GIKFLEFIKPFCAVLPEIQKPERKIQFREKVL) are cytoplasmic. Residues 34–53 (WTAITLFIFLVCCQIPLFGI) form a helical membrane-spanning segment. Residues 54 to 76 (MSSDSADPFYWMRVILASNRGTL) lie on the Lumenal side of the membrane. The helical transmembrane segment at 77-96 (MELGISPIVTSGLIMQLLAG) threads the bilayer. Over 97-117 (AKIIEVGDTPKDRALFNGAQK) the chain is Cytoplasmic. The helical transmembrane segment at 118 to 138 (LFGMIITIGQAIVYVMTGMYG) threads the bilayer. Topologically, residues 139 to 144 (DPSEMG) are lumenal. A helical transmembrane segment spans residues 145–165 (AGICLLIIIQLFVAGLIVLLL). At 166-172 (DELLQKG) the chain is on the cytoplasmic side. The helical transmembrane segment at 173-193 (YGLGSGISLFIATNICETIVW) threads the bilayer. Residues 194–240 (KAFSPTTVNTGRGTEFEGAIIALFHLLATRTDKVRALREAFYRQNLP) lie on the Lumenal side of the membrane. Residues 241–261 (NILNLIATVFVFAVVIYFQGF) traverse the membrane as a helical segment. The Cytoplasmic segment spans residues 262–288 (RVDLPIKSARYRGQYNTYPIKLFYTSN). The helical transmembrane segment at 289–309 (IPIILQSALVSNLYVISQMLS) threads the bilayer. At 310–354 (TRFSGNFLVNLLGTWSDATSGGPARAYPVAGLCYYLSPPESFGSV) the chain is on the lumenal side. Residues 355 to 375 (LDDPVHAAIYIVFMLGSCAFF) form a helical membrane-spanning segment. Topologically, residues 376 to 420 (SKTWIEVSGSSAKDVAKQLKEQQMVMRGHRETSMVHELNRYIPTA) are cytoplasmic. The helical transmembrane segment at 421–441 (AAFGGLCIGGLSVMADFLGAI) threads the bilayer. At 442–445 (GSGT) the chain is on the lumenal side. A helical membrane pass occupies residues 446–462 (GILLAVTIIYQYFEIFV). At 463–476 (KEQSEMGSMGALLF) the chain is on the cytoplasmic side.

This sequence belongs to the SecY/SEC61-alpha family. As to quaternary structure, the SEC61 channel-forming translocon complex consists of channel-forming core components SEC61A1, SEC61B and SEC61G and different auxiliary components such as SEC62 and SEC63. The SEC61 channel associates with the multi-pass translocon (MPT) complex.

It is found in the endoplasmic reticulum membrane. Its function is as follows. Component of SEC61 channel-forming translocon complex that mediates transport of signal peptide-containing precursor polypeptides across the endoplasmic reticulum (ER). Forms a ribosome receptor and a gated pore in the ER membrane, both functions required for cotranslational translocation of nascent polypeptides. May cooperate with auxiliary protein SEC62, SEC63 and HSPA5/BiP to enable post-translational transport of small presecretory proteins. The SEC61 channel is also involved in ER membrane insertion of transmembrane proteins: it mediates membrane insertion of the first few transmembrane segments of proteins, while insertion of subsequent transmembrane regions of multi-pass membrane proteins is mediated by the multi-pass translocon (MPT) complex. This chain is Protein transport protein Sec61 subunit alpha (sec61a), found in Notothenia angustata (Rockcod).